A 201-amino-acid polypeptide reads, in one-letter code: uncharacterized protein (201 aa).

The Bro-N domain occupies 15–122; the sequence is KNQIQFSTFN…EVLPQIRKTG (108 aa).

This is an uncharacterized protein from Haemophilus influenzae (strain ATCC 51907 / DSM 11121 / KW20 / Rd).